We begin with the raw amino-acid sequence, 545 residues long: Glucose-6-phosphate isomerase (545 aa).

Glu-349 acts as the Proton donor in catalysis. Catalysis depends on residues His-380 and Lys-509.

This sequence belongs to the GPI family.

It localises to the cytoplasm. The catalysed reaction is alpha-D-glucose 6-phosphate = beta-D-fructose 6-phosphate. The protein operates within carbohydrate biosynthesis; gluconeogenesis. It participates in carbohydrate degradation; glycolysis; D-glyceraldehyde 3-phosphate and glycerone phosphate from D-glucose: step 2/4. In terms of biological role, catalyzes the reversible isomerization of glucose-6-phosphate to fructose-6-phosphate. The chain is Glucose-6-phosphate isomerase from Chelativorans sp. (strain BNC1).